An 806-amino-acid polypeptide reads, in one-letter code: SH3-containing GRB2-like protein 3-interacting protein 1 (806 aa).

Disordered stretches follow at residues 1–115 (MMEG…ESHK) and 142–278 (SIGN…QAAT). Composition is skewed to basic and acidic residues over residues 16–32 (RKKE…DRDG) and 40–54 (PPYH…EGGK). Phosphoserine is present on residues S78, S104, S105, S107, S149, S151, S156, and S169. A phosphothreonine mark is found at T180 and T182. S236 and F243 each carry phosphoserine. A compositionally biased stretch (pro residues) spans 245–260 (TGTPPPLPPKTVPATP). Phosphothreonine occurs at positions 247 and 259. A phosphoserine mark is found at S265, D274, S287, S289, S300, S316, and S319. Polar residues predominate over residues 265–276 (SPLTVATGNDQA). A compositionally biased stretch (basic and acidic residues) spans 315–324 (FSDASPEHVT). The disordered stretch occupies residues 315-533 (FSDASPEHVT…SRGPSPLTMG (219 aa)). T324, T328, and T335 each carry phosphothreonine. Residues 335 to 345 (TPPAASDIPAD) are compositionally biased toward low complexity. The residue at position 338 (A338) is a Phosphoserine. Pro residues predominate over residues 346-369 (SPAPAPPGPTGSAGPPGPPGPRHV). Position 371 is a phosphoserine (S371). Over residues 377 to 392 (EVQKKVAEQTFIKDDY) the composition is skewed to basic and acidic residues. S398 is modified (phosphoserine). T409 carries the phosphothreonine modification. Residues 436–453 (TSGASSPARPATPLVPCS) are compositionally biased toward low complexity. Residues 454-473 (TTPPPPPPRPPSRPKLPPGK) are compositionally biased toward pro residues. 2 stretches are compositionally biased toward low complexity: residues 480–490 (SRPFSPPIHSS) and 497–520 (PLAR…TTPT). Phosphoserine occurs at positions 484, 505, and 533. The 269-residue stretch at 537–805 (TLPVAAAFTE…RFAAGKYLAD (269 aa)) folds into the MHD domain. Interaction with DPF motifs-containing proteins regions lie at residues 539–545 (PVAAAFT), 571–573 (SFP), 645–648 (TYYN), and 791–796 (SLIKKR). The tract at residues 627–806 (MPNLMTHLKK…FAAGKYLADN (180 aa)) is necessary and sufficient to mediate interaction with CANX.

In terms of assembly, interacts with proteins essential or regulating the formation of functional clathrin-coated pits. Interacts with CANX. Interacts with AP2A1. Interacts with EPS15. Interacts with SH3GL3. Interacts with AMPH. Interacts with ITSN1 (via SH3 domains). Interacts with and REPS1. Detected in brain, spinal cord and cerebellum.

Its subcellular location is the membrane. The protein localises to the clathrin-coated pit. In terms of biological role, may function in clathrin-mediated endocytosis. Has both a membrane binding/tubulating activity and the ability to recruit proteins essential to the formation of functional clathrin-coated pits. Has a preference for membranes enriched in phosphatidylserine and phosphoinositides and is required for the endocytosis of the transferrin receptor. May also bind tubulin. May play a role in the regulation of energy homeostasis. In Mus musculus (Mouse), this protein is SH3-containing GRB2-like protein 3-interacting protein 1 (Sgip1).